We begin with the raw amino-acid sequence, 369 residues long: Chorismate synthase (369 aa).

Residues arginine 48 and arginine 54 each contribute to the NADP(+) site. Residues 125–127, 238–239, glycine 278, 293–297, and arginine 319 contribute to the FMN site; these read RSS, NA, and KPTSS.

Belongs to the chorismate synthase family. As to quaternary structure, homotetramer. FMNH2 is required as a cofactor.

It carries out the reaction 5-O-(1-carboxyvinyl)-3-phosphoshikimate = chorismate + phosphate. Its pathway is metabolic intermediate biosynthesis; chorismate biosynthesis; chorismate from D-erythrose 4-phosphate and phosphoenolpyruvate: step 7/7. Functionally, catalyzes the anti-1,4-elimination of the C-3 phosphate and the C-6 proR hydrogen from 5-enolpyruvylshikimate-3-phosphate (EPSP) to yield chorismate, which is the branch point compound that serves as the starting substrate for the three terminal pathways of aromatic amino acid biosynthesis. This reaction introduces a second double bond into the aromatic ring system. This Burkholderia mallei (strain NCTC 10229) protein is Chorismate synthase.